We begin with the raw amino-acid sequence, 313 residues long: Porphobilinogen deaminase (313 aa).

The residue at position 242 (cysteine 242) is an S-(dipyrrolylmethanemethyl)cysteine.

This sequence belongs to the HMBS family. Monomer. It depends on dipyrromethane as a cofactor.

The enzyme catalyses 4 porphobilinogen + H2O = hydroxymethylbilane + 4 NH4(+). Its pathway is porphyrin-containing compound metabolism; protoporphyrin-IX biosynthesis; coproporphyrinogen-III from 5-aminolevulinate: step 2/4. Its function is as follows. Tetrapolymerization of the monopyrrole PBG into the hydroxymethylbilane pre-uroporphyrinogen in several discrete steps. The sequence is that of Porphobilinogen deaminase from Pseudomonas aeruginosa (strain LESB58).